A 436-amino-acid chain; its full sequence is MAAKWEKKDNNQGELTFEIAPDKIKEGLDKAFQRTKKNLAVPGFRKGRVPRQIFNQMYGEEALYQDALNIVLPEAYDAAIKEAGIEPVDQPQVDVESMDKDQPWVLKAVVTVKPDVKLGEYKGLSVTKQNTRVYQKDIDAEIEKQRQQQAELVLKEDEAAAKGDTVVIDFDGYVDGKQFDGGKADNYSLELGSNSFIPGFEDQLVGHKAGEDVDVKVTFPADYQAEDLRDKEATFKVTIHEVKEKQLPELDDEFAKDVDEDVDSLEELEAKTKDRLKEQKVTAAHDAIEDEAISEAVDNAEIAAVPEAMLKDDIDRQMDQYLANMQQQGIEPKMYFQLTGTTEDDLRKQFADGAEKRIKTNLVLEAVVEAEKIEPSEDEVAAEVKDLASQYGMEESAVRSALSDDMLKHDIAIKSAVDLIADSAKQDKKKDAEDDE.

A PPIase FKBP-type domain is found at 163–248; that stretch reads GDTVVIDFDG…IHEVKEKQLP (86 aa).

Belongs to the FKBP-type PPIase family. Tig subfamily.

It localises to the cytoplasm. It carries out the reaction [protein]-peptidylproline (omega=180) = [protein]-peptidylproline (omega=0). Involved in protein export. Acts as a chaperone by maintaining the newly synthesized protein in an open conformation. Functions as a peptidyl-prolyl cis-trans isomerase. This is Trigger factor from Levilactobacillus brevis (strain ATCC 367 / BCRC 12310 / CIP 105137 / JCM 1170 / LMG 11437 / NCIMB 947 / NCTC 947) (Lactobacillus brevis).